We begin with the raw amino-acid sequence, 307 residues long: 4-hydroxy-3-methylbut-2-enyl diphosphate reductase (307 aa).

Cys-12 is a [4Fe-4S] cluster binding site. (2E)-4-hydroxy-3-methylbut-2-enyl diphosphate is bound by residues His-41 and His-74. Dimethylallyl diphosphate contacts are provided by His-41 and His-74. Isopentenyl diphosphate contacts are provided by His-41 and His-74. Cys-96 is a binding site for [4Fe-4S] cluster. His-124 serves as a coordination point for (2E)-4-hydroxy-3-methylbut-2-enyl diphosphate. His-124 is a dimethylallyl diphosphate binding site. His-124 serves as a coordination point for isopentenyl diphosphate. The Proton donor role is filled by Glu-126. Thr-165 is a (2E)-4-hydroxy-3-methylbut-2-enyl diphosphate binding site. Position 195 (Cys-195) interacts with [4Fe-4S] cluster. Residues Ser-223, Ser-224, Asn-225, and Ser-267 each coordinate (2E)-4-hydroxy-3-methylbut-2-enyl diphosphate. Residues Ser-223, Ser-224, Asn-225, and Ser-267 each coordinate dimethylallyl diphosphate. Isopentenyl diphosphate is bound by residues Ser-223, Ser-224, Asn-225, and Ser-267.

This sequence belongs to the IspH family. Requires [4Fe-4S] cluster as cofactor.

It carries out the reaction isopentenyl diphosphate + 2 oxidized [2Fe-2S]-[ferredoxin] + H2O = (2E)-4-hydroxy-3-methylbut-2-enyl diphosphate + 2 reduced [2Fe-2S]-[ferredoxin] + 2 H(+). The catalysed reaction is dimethylallyl diphosphate + 2 oxidized [2Fe-2S]-[ferredoxin] + H2O = (2E)-4-hydroxy-3-methylbut-2-enyl diphosphate + 2 reduced [2Fe-2S]-[ferredoxin] + 2 H(+). It functions in the pathway isoprenoid biosynthesis; dimethylallyl diphosphate biosynthesis; dimethylallyl diphosphate from (2E)-4-hydroxy-3-methylbutenyl diphosphate: step 1/1. The protein operates within isoprenoid biosynthesis; isopentenyl diphosphate biosynthesis via DXP pathway; isopentenyl diphosphate from 1-deoxy-D-xylulose 5-phosphate: step 6/6. Catalyzes the conversion of 1-hydroxy-2-methyl-2-(E)-butenyl 4-diphosphate (HMBPP) into a mixture of isopentenyl diphosphate (IPP) and dimethylallyl diphosphate (DMAPP). Acts in the terminal step of the DOXP/MEP pathway for isoprenoid precursor biosynthesis. The sequence is that of 4-hydroxy-3-methylbut-2-enyl diphosphate reductase from Magnetococcus marinus (strain ATCC BAA-1437 / JCM 17883 / MC-1).